Consider the following 543-residue polypeptide: CTP synthase (543 aa).

The tract at residues 1–265 (MTRYIFVTGG…DDFVVERFGL (265 aa)) is amidoligase domain. Ser-13 lines the CTP pocket. Ser-13 is a binding site for UTP. ATP-binding positions include 14-19 (SLGKGI) and Asp-71. 2 residues coordinate Mg(2+): Asp-71 and Glu-139. CTP is bound by residues 146 to 148 (DIE), 186 to 191 (KTKPTQ), and Lys-222. UTP-binding positions include 186-191 (KTKPTQ) and Lys-222. In terms of domain architecture, Glutamine amidotransferase type-1 spans 290-541 (TIAMVGKYME…VKAALAQHQK (252 aa)). An L-glutamine-binding site is contributed by Gly-351. The active-site Nucleophile; for glutamine hydrolysis is Cys-378. L-glutamine-binding positions include 379-382 (LGMQ), Glu-402, and Arg-469. Active-site residues include His-514 and Glu-516.

It belongs to the CTP synthase family. In terms of assembly, homotetramer.

It carries out the reaction UTP + L-glutamine + ATP + H2O = CTP + L-glutamate + ADP + phosphate + 2 H(+). The catalysed reaction is L-glutamine + H2O = L-glutamate + NH4(+). The enzyme catalyses UTP + NH4(+) + ATP = CTP + ADP + phosphate + 2 H(+). Its pathway is pyrimidine metabolism; CTP biosynthesis via de novo pathway; CTP from UDP: step 2/2. Its activity is regulated as follows. Allosterically activated by GTP, when glutamine is the substrate; GTP has no effect on the reaction when ammonia is the substrate. The allosteric effector GTP functions by stabilizing the protein conformation that binds the tetrahedral intermediate(s) formed during glutamine hydrolysis. Inhibited by the product CTP, via allosteric rather than competitive inhibition. In terms of biological role, catalyzes the ATP-dependent amination of UTP to CTP with either L-glutamine or ammonia as the source of nitrogen. Regulates intracellular CTP levels through interactions with the four ribonucleotide triphosphates. The sequence is that of CTP synthase from Pseudomonas savastanoi pv. phaseolicola (strain 1448A / Race 6) (Pseudomonas syringae pv. phaseolicola (strain 1448A / Race 6)).